A 724-amino-acid chain; its full sequence is Solute carrier organic anion transporter family member 4C1 (724 aa).

Over 1–105 (MKSAKGIENL…QCLQRCNTPG (105 aa)) the chain is Cytoplasmic. S15, S16, S24, S26, and S28 each carry phosphoserine. Residues 24 to 71 (SASPSQVEVSALSSDPQRENSQPQELQKPQEPQKSPEPSLPSAPPNVS) are disordered. The segment covering 25-38 (ASPSQVEVSALSSD) has biased composition (polar residues). Low complexity predominate over residues 44-60 (SQPQELQKPQEPQKSPE). The chain crosses the membrane as a helical span at residues 106 to 126 (GFLLHYCLLAVTQGIVVNGLV). Topologically, residues 127 to 145 (NISISTIEKRYEMKSSLTG) are extracellular. A helical membrane pass occupies residues 146 to 166 (LISSSYDISFCLLSLFVSFFG). Residues 167 to 172 (ERGHKP) are Cytoplasmic-facing. Residues 173 to 197 (RWLAFAAFMIGLGALVFSLPQFFSG) traverse the membrane as a helical segment. Residues 198 to 224 (EYKLGSLFEDTCVTTRNSTSCTSSTSS) are Extracellular-facing. The helical transmembrane segment at 225–254 (LSNYLYVFILGQLLLGAGGTPLYTLGTAFL) threads the bilayer. Over 255 to 274 (DDSVPTHKSSLYIGTGYAMS) the chain is Cytoplasmic. The chain crosses the membrane as a helical span at residues 275-295 (ILGPAIGYVLGGQLLTIYVDV). The Extracellular portion of the chain corresponds to 296 to 311 (AMGESTDITEDDPRWL). The chain crosses the membrane as a helical span at residues 312-336 (GAWWIGFLLSWIFAWSLIIPFSCFP). The Cytoplasmic portion of the chain corresponds to 337-377 (KHLPGTAEIQAGKTSQAHQSNSNADAKFGKSIKDFPAALKN). Residues 378–399 (LMKNAVFMCLVLSTSSEALITT) form a helical membrane-spanning segment. Residues 400–419 (GFATFLPKFIENQFGLTSSF) are Extracellular-facing. Residues 420 to 443 (AATLGGAVLIPGAALGQILGGFLV) form a helical membrane-spanning segment. Residues 444-447 (SKFK) lie on the Cytoplasmic side of the membrane. Residues 448 to 471 (MTCKNTMKFALFTSGVALTLSFVF) traverse the membrane as a helical segment. Residues 472–580 (IYAKCGNEPF…ETHCAKLPIF (109 aa)) are Extracellular-facing. The Kazal-like domain maps to 495-549 (GNLIAPCNANCNCLRSYYYPVCGDGVQYFSPCFAGCSNSVAHRKPKVYYNCSCIE). 3 disulfides stabilise this stretch: C501-C530, C507-C526, and C516-C547. Residues 581 to 603 (LCIFFIVIIFTFMAGTPITVSIL) traverse the membrane as a helical segment. Topologically, residues 604–612 (RCVNHRQRS) are cytoplasmic. Residues 613–638 (LALGIQFMVLRLLGTIPGPIIFGFTI) traverse the membrane as a helical segment. Over 639-672 (DSTCILWDINDCGIKGACRIYDNIKMAHMLVAIS) the chain is Extracellular. The chain crosses the membrane as a helical span at residues 673–690 (VTCKVITMFFNGFAIFLY). Over 691-724 (KPPPSATDLSFHKENAVVTNVLAEQDLNKIVKEG) the chain is Cytoplasmic.

Belongs to the organo anion transporter (TC 2.A.60) family.

It localises to the basolateral cell membrane. It catalyses the reaction estrone 3-sulfate(out) = estrone 3-sulfate(in). The enzyme catalyses L-thyroxine(out) = L-thyroxine(in). It carries out the reaction 3,3',5-triiodo-L-thyronine(out) = 3,3',5-triiodo-L-thyronine(in). The catalysed reaction is chenodeoxycholate(out) = chenodeoxycholate(in). It catalyses the reaction glycocholate(out) = glycocholate(in). The enzyme catalyses L-homoarginine(in) = L-homoarginine(out). It carries out the reaction L-arginine(in) = L-arginine(out). The catalysed reaction is N(omega),N(omega)-dimethyl-L-arginine(out) = N(omega),N(omega)-dimethyl-L-arginine(in). Mediates the transport of organic anions such as steroids (estrone 3-sulfate, chenodeoxycholate, glycocholate) and thyroid hormones (3,3',5-triiodo-L-thyronine (T3), L-thyroxine (T4)), in the kidney. Capable of transporting cAMP and pharmacological substances such as digoxin, ouabain and methotrexate. Transport is independent of sodium, chloride ion, and ATP. Transport activity is stimulated by an acidic extracellular environment due to increased substrate affinity to the transporter. The driving force for this transport activity is currently not known. The role of hydrogencarbonate (HCO3(-), bicarbonate) as the probable counteranion that exchanges for organic anions is still not well defined. Functions as an uptake transporter at the apical membrane, suggesting a role in renal reabsorption. Involved in the renal secretion of the uremic toxin ADMA (N(omega),N(omega)-dimethyl-L-arginine or asymmetrical dimethylarginine), which is associated to cardiovascular events and mortality, and the structurally related amino acids L-arginine and L-homoarginine (a cardioprotective biomarker). Can act bidirectionally, suggesting a dual protective role of this transport protein; exporting L-homoarginine after being synthesized in proximal tubule cells, and mediating uptake of ADMA from the blood into proximal tubule cells where it is degraded by the enzyme dimethylarginine dimethylaminohydrolase 1 (DDAH1). May be involved in sperm maturation by enabling directed movement of organic anions and compounds within or between cells. This ion-transporting process is important to maintain the strict epididymal homeostasis necessary for sperm maturation. May have a role in secretory functions since seminal vesicle epithelial cells are assumed to secrete proteins involved in decapacitation by modifying surface proteins to facilitate the acquisition of the ability to fertilize the egg. The polypeptide is Solute carrier organic anion transporter family member 4C1 (Pongo abelii (Sumatran orangutan)).